The chain runs to 349 residues: UDP-3-O-acylglucosamine N-acyltransferase (349 aa).

Residue H246 is the Proton acceptor of the active site.

The protein belongs to the transferase hexapeptide repeat family. LpxD subfamily. As to quaternary structure, homotrimer.

The enzyme catalyses a UDP-3-O-[(3R)-3-hydroxyacyl]-alpha-D-glucosamine + a (3R)-hydroxyacyl-[ACP] = a UDP-2-N,3-O-bis[(3R)-3-hydroxyacyl]-alpha-D-glucosamine + holo-[ACP] + H(+). The protein operates within bacterial outer membrane biogenesis; LPS lipid A biosynthesis. Catalyzes the N-acylation of UDP-3-O-acylglucosamine using 3-hydroxyacyl-ACP as the acyl donor. Is involved in the biosynthesis of lipid A, a phosphorylated glycolipid that anchors the lipopolysaccharide to the outer membrane of the cell. The polypeptide is UDP-3-O-acylglucosamine N-acyltransferase (Nostoc sp. (strain PCC 7120 / SAG 25.82 / UTEX 2576)).